The following is a 558-amino-acid chain: Dihydroxy-acid dehydratase (558 aa).

Cys-50 lines the [2Fe-2S] cluster pocket. A Mg(2+)-binding site is contributed by Asp-82. Cys-123 serves as a coordination point for [2Fe-2S] cluster. Asp-124 and Lys-125 together coordinate Mg(2+). At Lys-125 the chain carries N6-carboxylysine. Cys-195 is a binding site for [2Fe-2S] cluster. Glu-447 provides a ligand contact to Mg(2+). Catalysis depends on Ser-472, which acts as the Proton acceptor.

This sequence belongs to the IlvD/Edd family. In terms of assembly, homodimer. The cofactor is [2Fe-2S] cluster. Mg(2+) serves as cofactor.

The catalysed reaction is (2R)-2,3-dihydroxy-3-methylbutanoate = 3-methyl-2-oxobutanoate + H2O. It catalyses the reaction (2R,3R)-2,3-dihydroxy-3-methylpentanoate = (S)-3-methyl-2-oxopentanoate + H2O. The protein operates within amino-acid biosynthesis; L-isoleucine biosynthesis; L-isoleucine from 2-oxobutanoate: step 3/4. It functions in the pathway amino-acid biosynthesis; L-valine biosynthesis; L-valine from pyruvate: step 3/4. Its function is as follows. Functions in the biosynthesis of branched-chain amino acids. Catalyzes the dehydration of (2R,3R)-2,3-dihydroxy-3-methylpentanoate (2,3-dihydroxy-3-methylvalerate) into 2-oxo-3-methylpentanoate (2-oxo-3-methylvalerate) and of (2R)-2,3-dihydroxy-3-methylbutanoate (2,3-dihydroxyisovalerate) into 2-oxo-3-methylbutanoate (2-oxoisovalerate), the penultimate precursor to L-isoleucine and L-valine, respectively. The polypeptide is Dihydroxy-acid dehydratase (Saccharolobus islandicus (strain M.16.27) (Sulfolobus islandicus)).